The chain runs to 583 residues: Glycine--tRNA ligase (583 aa).

The substrate site is built by Arg-100 and Glu-166. Residues 198–200, 208–213, 328–329, and 443–446 each bind ATP; these read RNE, VRLREF, EV, and GTDR. Residue 213 to 217 participates in substrate binding; that stretch reads FTIME. 439–443 lines the substrate pocket; sequence EPSFG.

This sequence belongs to the class-II aminoacyl-tRNA synthetase family.

The protein localises to the cytoplasm. It catalyses the reaction tRNA(Gly) + glycine + ATP = glycyl-tRNA(Gly) + AMP + diphosphate. In terms of biological role, catalyzes the attachment of glycine to tRNA(Gly). The sequence is that of Glycine--tRNA ligase from Aeropyrum pernix (strain ATCC 700893 / DSM 11879 / JCM 9820 / NBRC 100138 / K1).